The sequence spans 402 residues: Secondary metabolism regulator laeA (402 aa).

Residues 1–70 (MSLKYYLNDL…MSPTEVCSTD (70 aa)) are disordered. Over residues 11–21 (SDSDSESESEC) the composition is skewed to acidic residues.

The protein belongs to the methyltransferase superfamily. LaeA methyltransferase family.

Its subcellular location is the nucleus. It carries out the reaction L-methionyl-[protein] + S-adenosyl-L-methionine = S-methyl-L-methionyl-[protein] + S-adenosyl-L-homocysteine. Methyltransferase that performs automethylation. No other methyl-accepting substrate has been identified yet. Acts as a global regulator for secondary metabolite gene expression. Negatively regulates the production of coprinoferrin, a structurally novel acylated tripeptide hydroxamate siderophore. This Coprinopsis cinerea (strain Okayama-7 / 130 / ATCC MYA-4618 / FGSC 9003) (Inky cap fungus) protein is Secondary metabolism regulator laeA.